The sequence spans 146 residues: Large ribosomal subunit protein uL15 (146 aa).

A disordered region spans residues 1–58; that stretch reads MKLNELSPPKGARTARKRKGRGPGSGLGKTAGKGHKGQKARSGGGVRPGFEGGQMPVH. Composition is skewed to gly residues over residues 22-31 and 42-52; these read GPGSGLGKTA and SGGGVRPGFEG.

Belongs to the universal ribosomal protein uL15 family. In terms of assembly, part of the 50S ribosomal subunit.

Binds to the 23S rRNA. The protein is Large ribosomal subunit protein uL15 of Desulfatibacillum aliphaticivorans.